Reading from the N-terminus, the 528-residue chain is Glutamyl-tRNA(Gln) amidotransferase subunit B, mitochondrial (528 aa).

A mitochondrion-targeting transit peptide spans 1–21 (MSWRLSFRTNLLIYNVRRRNY).

The protein belongs to the GatB/GatE family. GatB subfamily. In terms of assembly, subunit of the heterotrimeric GatCAB amidotransferase (AdT) complex, composed of A, B and C subunits.

Its subcellular location is the mitochondrion. It carries out the reaction L-glutamyl-tRNA(Gln) + L-glutamine + ATP + H2O = L-glutaminyl-tRNA(Gln) + L-glutamate + ADP + phosphate + H(+). Functionally, allows the formation of correctly charged Gln-tRNA(Gln) through the transamidation of misacylated Glu-tRNA(Gln) in the mitochondria. The reaction takes place in the presence of glutamine and ATP through an activated gamma-phospho-Glu-tRNA(Gln). The chain is Glutamyl-tRNA(Gln) amidotransferase subunit B, mitochondrial from Aedes aegypti (Yellowfever mosquito).